The primary structure comprises 88 residues: MAASRLPPATLTLKQFVRRQQVLLLYRRILQTIRQVPNDSDRKYLKDWAREEFKRNKSATEEDTIRMMITQGNMQLKELEKTLALAKS.

A mitochondrion-targeting transit peptide spans 1–19 (MAASRLPPATLTLKQFVRR).

The protein belongs to the complex I LYR family.

It localises to the mitochondrion. Functionally, involved in efficient integration of the N-module into mitochondrial respiratory chain complex I. The protein is LYR motif-containing protein 2 (LYRM2) of Pongo abelii (Sumatran orangutan).